The following is a 3075-amino-acid chain: Probable polyketide synthase 30 (3075 aa).

Residues 26–458 enclose the Ketosynthase family 3 (KS3) domain; it reads SGDVAVIGIG…GSNVCLILSE (433 aa). Catalysis depends on for beta-ketoacyl synthase activity residues Cys-198, His-337, and His-381. The acyl/malonyl transferase stretch occupies residues 663–696; that stretch reads GVSADIIIGHSLGEVSSPYCSGMIDFQTLCYLTY. Catalysis depends on Ser-673, which acts as the For acyl/malonyl transferase activity. The N-terminal hotdog fold stretch occupies residues 963 to 1085; that stretch reads GPSINNLGNN…GNFSLTKHNS (123 aa). The PKS/mFAS DH domain maps to 963 to 1269; that stretch reads GPSINNLGNN…CALVSLGSNP (307 aa). The active-site Proton acceptor; for dehydratase activity is the His-997. Positions 1102–1269 are C-terminal hotdog fold; the sequence is NFTSMSKQDF…CALVSLGSNP (168 aa). The active-site Proton donor; for dehydratase activity is the Asp-1174. The Carrier domain maps to 2533 to 2610; it reads DNNEIIRSTI…QSIEIIKSAH (78 aa). O-(pantetheine 4'-phosphoryl)serine is present on Ser-2570.

The cofactor is pantetheine 4'-phosphate.

Probable polyketide synthase. May be involved in the process of cell migration. This chain is Probable polyketide synthase 30 (pks30), found in Dictyostelium discoideum (Social amoeba).